Here is a 132-residue protein sequence, read N- to C-terminus: ATP synthase epsilon chain (132 aa).

Belongs to the ATPase epsilon chain family. As to quaternary structure, F-type ATPases have 2 components, CF(1) - the catalytic core - and CF(0) - the membrane proton channel. CF(1) has five subunits: alpha(3), beta(3), gamma(1), delta(1), epsilon(1). CF(0) has three main subunits: a, b and c.

Its subcellular location is the cell membrane. Functionally, produces ATP from ADP in the presence of a proton gradient across the membrane. The protein is ATP synthase epsilon chain (atpC) of Bacillus caldotenax.